We begin with the raw amino-acid sequence, 224 residues long: Adenylate kinase (224 aa).

Residue 10–15 (GSGKST) participates in ATP binding. An NMP region spans residues 30–59 (ASGDIIRAEINKGNALGREMKKYIEKGDLL). Residues Ser31, Arg36, 57–59 (DLL), 83–86 (GYPR), and Gln90 each bind AMP. Residues 124-161 (GRRICRQCGAVYHIKYNPSKVPGKCDICGGEVIQREDD) form an LID region. Residue Arg125 coordinates ATP. Zn(2+) is bound by residues Cys128 and Cys131. 134-135 (VY) serves as a coordination point for ATP. The Zn(2+) site is built by Cys148 and Cys151. 2 residues coordinate AMP: Arg158 and Arg169. Gly197 is a binding site for ATP.

This sequence belongs to the adenylate kinase family. Monomer.

Its subcellular location is the cytoplasm. The catalysed reaction is AMP + ATP = 2 ADP. The protein operates within purine metabolism; AMP biosynthesis via salvage pathway; AMP from ADP: step 1/1. In terms of biological role, catalyzes the reversible transfer of the terminal phosphate group between ATP and AMP. Plays an important role in cellular energy homeostasis and in adenine nucleotide metabolism. In Thermococcus sibiricus (strain DSM 12597 / MM 739), this protein is Adenylate kinase.